We begin with the raw amino-acid sequence, 220 residues long: Large ribosomal subunit protein eL15 (220 aa).

The segment covering 197 to 207 has biased composition (basic and acidic residues); sequence KKRHEASRGAR. A disordered region spans residues 197–220; it reads KKRHEASRGARDPWQIAEKLKEEK.

Belongs to the eukaryotic ribosomal protein eL15 family.

The polypeptide is Large ribosomal subunit protein eL15 (Desulfurococcus amylolyticus (strain DSM 18924 / JCM 16383 / VKM B-2413 / 1221n) (Desulfurococcus kamchatkensis)).